Consider the following 254-residue polypeptide: Imidazole glycerol phosphate synthase subunit HisF (254 aa).

Active-site residues include Asp-12 and Asp-131.

The protein belongs to the HisA/HisF family. As to quaternary structure, heterodimer of HisH and HisF.

The protein resides in the cytoplasm. It carries out the reaction 5-[(5-phospho-1-deoxy-D-ribulos-1-ylimino)methylamino]-1-(5-phospho-beta-D-ribosyl)imidazole-4-carboxamide + L-glutamine = D-erythro-1-(imidazol-4-yl)glycerol 3-phosphate + 5-amino-1-(5-phospho-beta-D-ribosyl)imidazole-4-carboxamide + L-glutamate + H(+). It functions in the pathway amino-acid biosynthesis; L-histidine biosynthesis; L-histidine from 5-phospho-alpha-D-ribose 1-diphosphate: step 5/9. Functionally, IGPS catalyzes the conversion of PRFAR and glutamine to IGP, AICAR and glutamate. The HisF subunit catalyzes the cyclization activity that produces IGP and AICAR from PRFAR using the ammonia provided by the HisH subunit. The sequence is that of Imidazole glycerol phosphate synthase subunit HisF from Herminiimonas arsenicoxydans.